The following is a 377-amino-acid chain: Mannan endo-1,4-beta-mannosidase A (377 aa).

Positions 1 to 18 are cleaved as a signal peptide; it reads MKLSHMLLSLASLGVATA. Trp-84 lines the substrate pocket. N-linked (GlcNAc...) asparagine glycosylation is present at Asn-105. Substrate is bound at residue Asn-197. Glu-198 serves as the catalytic Proton donor. Residue Asn-255 is glycosylated (N-linked (GlcNAc...) asparagine). Position 273 (Tyr-273) interacts with substrate. Glu-306 acts as the Nucleophile in catalysis. Residue Asn-326 is glycosylated (N-linked (GlcNAc...) asparagine). Trp-336 contacts substrate. Asn-357 carries N-linked (GlcNAc...) asparagine glycosylation.

It belongs to the glycosyl hydrolase 5 (cellulase A) family.

The protein localises to the secreted. The catalysed reaction is Random hydrolysis of (1-&gt;4)-beta-D-mannosidic linkages in mannans, galactomannans and glucomannans.. Functionally, endo-1,4-mannanase, a crucial enzyme for depolymerization of seed galactomannans and wood galactoglucomannans. This Aspergillus aculeatus protein is Mannan endo-1,4-beta-mannosidase A (manA).